The primary structure comprises 286 residues: Glycine--tRNA ligase alpha subunit (286 aa).

This sequence belongs to the class-II aminoacyl-tRNA synthetase family. As to quaternary structure, tetramer of two alpha and two beta subunits.

The protein localises to the cytoplasm. It catalyses the reaction tRNA(Gly) + glycine + ATP = glycyl-tRNA(Gly) + AMP + diphosphate. This is Glycine--tRNA ligase alpha subunit from Campylobacter concisus (strain 13826).